We begin with the raw amino-acid sequence, 297 residues long: tRNA dimethylallyltransferase (297 aa).

15-22 (GPTASGKS) is a binding site for ATP. 17 to 22 (TASGKS) provides a ligand contact to substrate. Interaction with substrate tRNA regions lie at residues 40–43 (DSMQ) and 164–168 (QRIVR).

Belongs to the IPP transferase family. Monomer. Mg(2+) serves as cofactor.

The enzyme catalyses adenosine(37) in tRNA + dimethylallyl diphosphate = N(6)-dimethylallyladenosine(37) in tRNA + diphosphate. In terms of biological role, catalyzes the transfer of a dimethylallyl group onto the adenine at position 37 in tRNAs that read codons beginning with uridine, leading to the formation of N6-(dimethylallyl)adenosine (i(6)A). The polypeptide is tRNA dimethylallyltransferase (Rhizobium johnstonii (strain DSM 114642 / LMG 32736 / 3841) (Rhizobium leguminosarum bv. viciae)).